We begin with the raw amino-acid sequence, 428 residues long: Beta-1,3-galactosyl-O-glycosyl-glycoprotein beta-1,6-N-acetylglucosaminyltransferase 4 (428 aa).

The Cytoplasmic portion of the chain corresponds to 1-12; it reads MRRCAVLHRLRC. A helical; Signal-anchor for type II membrane protein membrane pass occupies residues 13–30; sequence KFYVFVVSLFVVVKLVYL. Residues 31–428 lie on the Lumenal side of the membrane; sequence KISMDNSIYI…QLQQCLRRVS (398 aa). The N-linked (GlcNAc...) asparagine glycan is linked to Asn-59. Intrachain disulfides connect Cys-60/Cys-214, Cys-148/Cys-369, Cys-169/Cys-196, and Cys-378/Cys-410.

Belongs to the glycosyltransferase 14 family.

Its subcellular location is the golgi apparatus membrane. It carries out the reaction a 3-O-[beta-D-galactosyl-(1-&gt;3)-N-acetyl-alpha-D-galactosaminyl]-L-seryl-[protein] + UDP-N-acetyl-alpha-D-glucosamine = 3-O-{beta-D-galactosyl-(1-&gt;3)-[N-acetyl-beta-D-glucosaminyl-(1-&gt;6)]-N-acetyl-alpha-D-galactosaminyl}-L-seryl-[protein] + UDP + H(+). The catalysed reaction is a 3-O-[beta-D-galactosyl-(1-&gt;3)-N-acetyl-alpha-D-galactosaminyl]-L-threonyl-[protein] + UDP-N-acetyl-alpha-D-glucosamine = a 3-O-{beta-D-galactosyl-(1-&gt;3)-[N-acetyl-beta-D-glucosaminyl-(1-&gt;6)]-N-acetyl-alpha-D-galactosaminyl}-L-threonyl-[protein] + UDP + H(+). It participates in protein modification; protein glycosylation. Functionally, glycosyltransferase that mediates core 2 O-glycan branching, an important step in mucin-type biosynthesis. The protein is Beta-1,3-galactosyl-O-glycosyl-glycoprotein beta-1,6-N-acetylglucosaminyltransferase 4 (gcnt4) of Danio rerio (Zebrafish).